Reading from the N-terminus, the 273-residue chain is Dermonecrotic toxin SdSicTox-betaIIB1aiii (273 aa).

Residue histidine 4 is part of the active site. Mg(2+) contacts are provided by glutamate 24 and aspartate 26. Catalysis depends on histidine 40, which acts as the Nucleophile. Cystine bridges form between cysteine 44–cysteine 50 and cysteine 46–cysteine 189. Position 84 (aspartate 84) interacts with Mg(2+).

This sequence belongs to the arthropod phospholipase D family. Class II subfamily. It depends on Mg(2+) as a cofactor. In terms of tissue distribution, expressed by the venom gland.

The protein resides in the secreted. It carries out the reaction an N-(acyl)-sphingosylphosphocholine = an N-(acyl)-sphingosyl-1,3-cyclic phosphate + choline. It catalyses the reaction an N-(acyl)-sphingosylphosphoethanolamine = an N-(acyl)-sphingosyl-1,3-cyclic phosphate + ethanolamine. The catalysed reaction is a 1-acyl-sn-glycero-3-phosphocholine = a 1-acyl-sn-glycero-2,3-cyclic phosphate + choline. The enzyme catalyses a 1-acyl-sn-glycero-3-phosphoethanolamine = a 1-acyl-sn-glycero-2,3-cyclic phosphate + ethanolamine. Functionally, dermonecrotic toxins cleave the phosphodiester linkage between the phosphate and headgroup of certain phospholipids (sphingolipid and lysolipid substrates), forming an alcohol (often choline) and a cyclic phosphate. This toxin acts on sphingomyelin (SM). It may also act on ceramide phosphoethanolamine (CPE), lysophosphatidylcholine (LPC) and lysophosphatidylethanolamine (LPE), but not on lysophosphatidylserine (LPS), and lysophosphatidylglycerol (LPG). It acts by transphosphatidylation, releasing exclusively cyclic phosphate products as second products. Induces dermonecrosis, hemolysis, increased vascular permeability, edema, inflammatory response, and platelet aggregation. In Sicarius cf. damarensis (strain GJB-2008) (Six-eyed sand spider), this protein is Dermonecrotic toxin SdSicTox-betaIIB1aiii.